Here is a 165-residue protein sequence, read N- to C-terminus: Lipoprotein signal peptidase (165 aa).

4 helical membrane-spanning segments follow: residues 7–27 (FFLL…KYWI), 28–48 (THTM…LYHV), 61–81 (FSHW…FWLW), and 87–107 (DKAL…GNLI). Residues D117 and D136 contribute to the active site. The chain crosses the membrane as a helical span at residues 128–148 (SFAIFNLADTFITLGAISILI).

The protein belongs to the peptidase A8 family.

Its subcellular location is the cell inner membrane. It carries out the reaction Release of signal peptides from bacterial membrane prolipoproteins. Hydrolyzes -Xaa-Yaa-Zaa-|-(S,diacylglyceryl)Cys-, in which Xaa is hydrophobic (preferably Leu), and Yaa (Ala or Ser) and Zaa (Gly or Ala) have small, neutral side chains.. It functions in the pathway protein modification; lipoprotein biosynthesis (signal peptide cleavage). Functionally, this protein specifically catalyzes the removal of signal peptides from prolipoproteins. The sequence is that of Lipoprotein signal peptidase from Bartonella bacilliformis (strain ATCC 35685 / KC583 / Herrer 020/F12,63).